Reading from the N-terminus, the 225-residue chain is MFATTLQGFTLGLAMIIPIGAQNAFVLSRGIHRNHHLLTATLCCLCDLVLIGIGVFGGANLLAASPIGLALLTWGGVLFLGWFGIRSLRSAWRGQGAKLADSPQLMGVKSVLAMTLGVTLLNPHVYLDTLMLLGSFGSQFAEELRSAFAAVAMLASLVWFYSLAFGAVVLSPWLARSRQGYSKLLILLLVSPCWGWRCNWRAGLCWRHKAIFVPHLIKINPGFMR.

5 helical membrane passes run methionine 1–alanine 21, leucine 37–glycine 57, serine 65–isoleucine 85, leucine 116–phenylalanine 136, and alanine 150–leucine 170.

It belongs to the LysE/ArgO transporter (TC 2.A.75) family.

Its subcellular location is the cell membrane. The sequence is that of Putative amino-acid transporter YggA from Aeromonas hydrophila.